The sequence spans 70 residues: Large ribosomal subunit protein eL38 (70 aa).

A Glycyl lysine isopeptide (Lys-Gly) (interchain with G-Cter in SUMO2) cross-link involves residue lysine 4. Residue lysine 9 is modified to N6-acetyllysine; alternate. A Glycyl lysine isopeptide (Lys-Gly) (interchain with G-Cter in SUMO2); alternate cross-link involves residue lysine 9. Lysine 67 is subject to N6-acetyllysine.

It belongs to the eukaryotic ribosomal protein eL38 family. Component of the large ribosomal subunit.

It localises to the cytoplasm. Its function is as follows. Component of the large ribosomal subunit. The ribosome is a large ribonucleoprotein complex responsible for the synthesis of proteins in the cell. This chain is Large ribosomal subunit protein eL38 (RPL38), found in Macaca fascicularis (Crab-eating macaque).